The primary structure comprises 505 residues: Buccalin (505 aa).

The N-terminal stretch at 1–25 is a signal peptide; the sequence is MAHHRGHRHILLYVSLALSLGLALA. Positions 26-62 are excised as a propeptide; sequence EDATDPSDDTGSFDDVEAVSEEADLDPYSMSQELNKR. V74 bears the Valine amide mark. L88 and L102 each carry leucine amide. The residue at position 106 (Q106) is a Pyrrolidone carboxylic acid. I116 is modified (isoleucine amide). Residues L129, L143, L157, L171, L185, L199, L213, L227, L241, L254, L267, L281, L294, L307, L321, and L335 each carry the leucine amide modification. E349 bears the Glutamic acid 1-amide mark. Leucine amide occurs at positions 363, 377, 391, 405, 419, and 433. Isoleucine amide is present on residues I447 and I461. Q465 is modified (pyrrolidone carboxylic acid). A disordered region spans residues 472-505; that stretch reads SGRLGKRSSSEQEEEDVRQVEKRSTTEEQSSKSL. L475 is subject to Leucine amide. Basic and acidic residues predominate over residues 488–505; that stretch reads VRQVEKRSTTEEQSSKSL. Residues 495–505 constitute a propeptide that is removed on maturation; that stretch reads STTEEQSSKSL.

In terms of tissue distribution, cholinergic motor neuron B15 innervating buccal muscles in Aplysia.

It is found in the secreted. In terms of biological role, modulatory neuropeptide, acting presynaptically on nerve terminals to inhibit acetylcholine release. The chain is Buccalin from Aplysia californica (California sea hare).